Here is a 478-residue protein sequence, read N- to C-terminus: Methionine aminopeptidase 2-1 (478 aa).

Positions 1–124 (MGSKSPEGHN…PRVPLSTLFP (124 aa)) are disordered. Positions 46 to 56 (NDDDDADDDEK) are enriched in acidic residues. The span at 92 to 104 (KKKKKRKRSKKKA) shows a compositional bias: basic residues. H230 is a binding site for substrate. D251, D262, and H331 together coordinate a divalent metal cation. H339 lines the substrate pocket. A divalent metal cation contacts are provided by E364 and E459.

The protein belongs to the peptidase M24A family. Methionine aminopeptidase eukaryotic type 2 subfamily. Co(2+) is required as a cofactor. Requires Zn(2+) as cofactor. It depends on Mn(2+) as a cofactor. The cofactor is Fe(2+).

It localises to the cytoplasm. It catalyses the reaction Release of N-terminal amino acids, preferentially methionine, from peptides and arylamides.. In terms of biological role, cotranslationally removes the N-terminal methionine from nascent proteins. The N-terminal methionine is often cleaved when the second residue in the primary sequence is small and uncharged (Met-Ala-, Cys, Gly, Pro, Ser, Thr, or Val). This is Methionine aminopeptidase 2-1 from Aspergillus clavatus (strain ATCC 1007 / CBS 513.65 / DSM 816 / NCTC 3887 / NRRL 1 / QM 1276 / 107).